The sequence spans 488 residues: Endoglucanase A (488 aa).

Residues His-59, 63–64, Tyr-90, and His-125 contribute to the substrate site; that span reads WY. Catalysis depends on Glu-163, which acts as the Proton donor. Tyr-226 serves as a coordination point for substrate. Glu-252 (nucleophile) is an active-site residue. Substrate contacts are provided by residues 258 to 259, Trp-286, and 291 to 293; these read AT and KDE. Disordered stretches follow at residues 326–362 and 388–451; these read ESAS…AWDP and EPGA…WDPT. Composition is skewed to pro residues over residues 332 to 353 and 405 to 416; these read PSDP…PPSD and PSEPSDPPPPSE. Residues 417–433 show a composition bias toward acidic residues; it reads PEPDPGEPDPGEPDPGE.

It belongs to the glycosyl hydrolase 5 (cellulase A) family.

It catalyses the reaction Endohydrolysis of (1-&gt;4)-beta-D-glucosidic linkages in cellulose, lichenin and cereal beta-D-glucans.. In Evansella cellulosilytica (strain ATCC 21833 / DSM 2522 / FERM P-1141 / JCM 9156 / N-4) (Bacillus cellulosilyticus), this protein is Endoglucanase A (celA).